Consider the following 558-residue polypeptide: N-terminal histidine N-methyltransferase (558 aa).

At 1–15 (MAPFRSIYEKDATKK) the chain is on the cytoplasmic side. The helical transmembrane segment at 16–32 (LVVGAALLVLAAFYSYV) threads the bilayer. Residues 33 to 49 (FLLTLAPVYGSTPSHIF) lie on the Lumenal side of the membrane. Residues 50 to 65 (HGYGVGIAGVAGWFSK) form a helical membrane-spanning segment. Topologically, residues 66-77 (DIVDRVSGRKAI) are cytoplasmic. The chain crosses the membrane as a helical span at residues 78–96 (YAIPVLAFFLPVVQYFVSQ). Residues 97 to 104 (QSSALGNP) lie on the Lumenal side of the membrane. A helical transmembrane segment spans residues 105-131 (AGPIFTEVLALYPLVLLSVACAGKLVQ). Topologically, residues 132–145 (AGLNLQRHGDLVAE) are cytoplasmic. Residues 146–169 (HIPLLGSYVIYSAGEHLIKAFLSR) traverse the membrane as a helical segment. The Lumenal portion of the chain corresponds to 170–172 (FIG). A helical transmembrane segment spans residues 173-194 (STVLLSRAGLQILIAIFYAAAV). Over 195–197 (PSK) the chain is Cytoplasmic. The helical transmembrane segment at 198–215 (ALLLAIPAFLFSVTSNTH) threads the bilayer. At 216–558 (LPLGHTTTAL…VLPDRVWEGW (343 aa)) the chain is on the lumenal side.

The protein belongs to the methyltransferase superfamily.

The protein localises to the endoplasmic reticulum membrane. It carries out the reaction L-histidyl-[protein] + S-adenosyl-L-methionine = N(tele)-methyl-L-histidyl-[protein] + S-adenosyl-L-homocysteine + H(+). In terms of biological role, protein-histidine N-methyltransferase that specifically mediates 3-methylhistidine (tele-methylhistidine) methylation at 'His-1', which protects the side-chain from oxidative damage. Methylates lytic polysaccharide monooxygenases (LPMOs) destined for secretion, including AN4702. The protein is N-terminal histidine N-methyltransferase of Emericella nidulans (strain FGSC A4 / ATCC 38163 / CBS 112.46 / NRRL 194 / M139) (Aspergillus nidulans).